A 261-amino-acid chain; its full sequence is Uridine-cytidine kinase 2 (261 aa).

Over residues 1–16 (MAGDSEQTLQNHQQPN) the composition is skewed to polar residues. The segment at 1–24 (MAGDSEQTLQNHQQPNGGEPFLIG) is disordered. At Ala2 the chain carries N-acetylalanine. Residue 27–35 (GGTASGKSS) participates in ATP binding. Asp84, Tyr112, His117, Arg166, Arg176, and Gln184 together coordinate substrate. Asp213 is an ATP binding site. Residues 236 to 261 (RQTNGCLNGYTPSRKRQASESSSRPH) form a disordered region. Ser254 is modified (phosphoserine).

The protein belongs to the uridine kinase family. As to quaternary structure, homotetramer. In terms of tissue distribution, according to PubMed:8812458; testis-specific. According to PubMed:11306702, placenta-specific.

The catalysed reaction is uridine + ATP = UMP + ADP + H(+). It carries out the reaction cytidine + ATP = CMP + ADP + H(+). It participates in pyrimidine metabolism; CTP biosynthesis via salvage pathway; CTP from cytidine: step 1/3. The protein operates within pyrimidine metabolism; UMP biosynthesis via salvage pathway; UMP from uridine: step 1/1. Phosphorylates uridine and cytidine to uridine monophosphate and cytidine monophosphate. Does not phosphorylate deoxyribonucleosides or purine ribonucleosides. Can use ATP or GTP as a phosphate donor. Can also phosphorylate cytidine and uridine nucleoside analogs such as 6-azauridine, 5-fluorouridine, 4-thiouridine, 5-bromouridine, N(4)-acetylcytidine, N(4)-benzoylcytidine, 5-fluorocytidine, 2-thiocytidine, 5-methylcytidine, and N(4)-anisoylcytidine. In Homo sapiens (Human), this protein is Uridine-cytidine kinase 2 (UCK2).